The following is a 602-amino-acid chain: Isocitrate dehydrogenase kinase/phosphatase (602 aa).

ATP-binding positions include 325-331 (APGIKGM) and lysine 346. Aspartate 381 is an active-site residue.

This sequence belongs to the AceK family.

The protein resides in the cytoplasm. It carries out the reaction L-seryl-[isocitrate dehydrogenase] + ATP = O-phospho-L-seryl-[isocitrate dehydrogenase] + ADP + H(+). In terms of biological role, bifunctional enzyme which can phosphorylate or dephosphorylate isocitrate dehydrogenase (IDH) on a specific serine residue. This is a regulatory mechanism which enables bacteria to bypass the Krebs cycle via the glyoxylate shunt in response to the source of carbon. When bacteria are grown on glucose, IDH is fully active and unphosphorylated, but when grown on acetate or ethanol, the activity of IDH declines drastically concomitant with its phosphorylation. The protein is Isocitrate dehydrogenase kinase/phosphatase of Paracidovorax citrulli (strain AAC00-1) (Acidovorax citrulli).